The following is a 177-amino-acid chain: Large ribosomal subunit protein uL6 (177 aa).

It belongs to the universal ribosomal protein uL6 family. In terms of assembly, part of the 50S ribosomal subunit.

Its function is as follows. This protein binds to the 23S rRNA, and is important in its secondary structure. It is located near the subunit interface in the base of the L7/L12 stalk, and near the tRNA binding site of the peptidyltransferase center. The chain is Large ribosomal subunit protein uL6 from Yersinia pseudotuberculosis serotype O:1b (strain IP 31758).